Here is a 361-residue protein sequence, read N- to C-terminus: NudC domain-containing protein 3 (361 aa).

The span at 87 to 97 (KIRRKEEEEAK) shows a compositional bias: basic and acidic residues. The interval 87 to 106 (KIRRKEEEEAKTVSAAAAEK) is disordered. Serine 146 carries the phosphoserine modification. The 93-residue stretch at 185–277 (AVRENYTWSQ…VGEYWWNAIL (93 aa)) folds into the CS domain. Residues serine 340 and serine 355 each carry the phosphoserine modification.

The protein is NudC domain-containing protein 3 (NUDCD3) of Pongo abelii (Sumatran orangutan).